We begin with the raw amino-acid sequence, 389 residues long: Jasmonate O-methyltransferase (389 aa).

Tyrosine 18 contacts S-adenosyl-L-homocysteine. Glutamine 25 lines the jasmonate pocket. Positions 60, 65, 97, 98, 142, and 143 each coordinate S-adenosyl-L-homocysteine. Jasmonate-binding residues include histidine 163 and tryptophan 164. Residues asparagine 186, aspartate 272, phenylalanine 274, and asparagine 275 each coordinate Mg(2+).

The protein belongs to the methyltransferase superfamily. Type-7 methyltransferase family. Requires Mg(2+) as cofactor. As to expression, expressed in rosettes, cauline leaves and developing flowers but not in young seedlings.

Its subcellular location is the cytoplasm. It is found in the nucleus. It catalyses the reaction jasmonate + S-adenosyl-L-methionine = methyl (-)-jasmonate + S-adenosyl-L-homocysteine. It participates in lipid metabolism; oxylipin biosynthesis. Its function is as follows. Catalyzes the methylation of jasmonate into methyljasmonate, a plant volatile that acts as an important cellular regulator mediating diverse developmental processes and defense responses. The protein is Jasmonate O-methyltransferase of Arabidopsis thaliana (Mouse-ear cress).